A 510-amino-acid chain; its full sequence is Putative serine protease K12H4.7 (510 aa).

Residues 1 to 19 (MKTLLAVLLAACVLTQVLS) form the signal peptide. The Charge relay system role is filled by Ser-187. A glycan (N-linked (GlcNAc...) asparagine) is linked at Asn-234. Asp-452 serves as the catalytic Charge relay system. The N-linked (GlcNAc...) asparagine glycan is linked to Asn-473. The active-site Charge relay system is His-477.

Belongs to the peptidase S28 family.

This chain is Putative serine protease K12H4.7, found in Caenorhabditis elegans.